The primary structure comprises 988 residues: Ubiquitin carboxyl-terminal hydrolase 36 (988 aa).

The tract at residues 16–55 (PTLRTDNNGARKQAEHPNNQSHHNHPHPTSNPNELPKPKR) is disordered. The span at 31–48 (HPNNQSHHNHPHPTSNPN) shows a compositional bias: low complexity. Residues 78–386 (TGMINVGNTC…NAYIMFFELD (309 aa)) form the USP domain. Cysteine 87 serves as the catalytic Nucleophile. Histidine 345 (proton acceptor) is an active-site residue. 3 disordered regions span residues 393-422 (PPAN…SPSP), 483-782 (ATSA…VTSN), and 868-988 (EQRQ…QQQT). Composition is skewed to low complexity over residues 408-422 (STTP…SPSP) and 490-509 (NGNK…KSIN). A phosphoserine mark is found at serine 419 and serine 421. Polar residues predominate over residues 532-544 (TTAQLPSMPNMTE). A phosphothreonine mark is found at threonine 561 and threonine 565. Residues serine 575 and serine 577 each carry the phosphoserine modification. The span at 592 to 601 (EGEDFSESDQ) shows a compositional bias: acidic residues. Residues 602-631 (ESGQTNGHSKTNGSLTNGSASSSVHVNNSK) show a composition bias toward polar residues. Positions 632 to 649 (QKTDAIDEIFKSLKKSAD) are enriched in basic and acidic residues. Serine 650 is modified (phosphoserine). Over residues 650–659 (SEEDDDEEEP) the composition is skewed to acidic residues. The span at 669-679 (PQKQSQSQSKA) shows a compositional bias: low complexity. Positions 680 to 689 (PPSPKTPPSP) are enriched in pro residues. Serine 682 is subject to Phosphoserine. Threonine 685 is modified (phosphothreonine). Serine 688 bears the Phosphoserine mark. Over residues 707 to 717 (VDAIDDDDDAV) the composition is skewed to acidic residues. Residue threonine 728 is modified to Phosphothreonine. The span at 735–747 (NPFSSSKPSTDSP) shows a compositional bias: polar residues. Serine 746 is subject to Phosphoserine. The residue at position 749 (threonine 749) is a Phosphothreonine. Residues 762–782 (ALKSHQQPRVGNGYQSNVTSN) are compositionally biased toward polar residues. 2 stretches are compositionally biased toward low complexity: residues 892–903 (SGSAKGNNASNS) and 930–943 (RFHN…FQQR).

This sequence belongs to the peptidase C19 family. In terms of assembly, interacts with atms/PAF1, but not with CycT.

The protein resides in the nucleus. The protein localises to the nucleolus. The enzyme catalyses Thiol-dependent hydrolysis of ester, thioester, amide, peptide and isopeptide bonds formed by the C-terminal Gly of ubiquitin (a 76-residue protein attached to proteins as an intracellular targeting signal).. In terms of biological role, required for maintaining multiple types of adult stem cells, including male and female germline, epithelial follicle cell and intestinal stem cells. May function as a transcriptional repressor by continually deubiquiting histone H2B at the promoters of genes critical for cellular differentiation, thereby preventing histone H3 'Lys-4' trimethylation (H3K4). Controls selective autophagy activation by ubiquitinated proteins. This is Ubiquitin carboxyl-terminal hydrolase 36 (Usp36) from Drosophila simulans (Fruit fly).